Reading from the N-terminus, the 92-residue chain is Small ribosomal subunit protein uS19 (92 aa).

This sequence belongs to the universal ribosomal protein uS19 family.

In terms of biological role, protein S19 forms a complex with S13 that binds strongly to the 16S ribosomal RNA. This chain is Small ribosomal subunit protein uS19, found in Acaryochloris marina (strain MBIC 11017).